A 141-amino-acid polypeptide reads, in one-letter code: Photosystem I reaction center subunit IV A, chloroplastic (141 aa).

Residues 1–49 (MASCNMASAASNFLVATPNVASNTNTSRTTMLFFSSKNYGSTAPRLVVR) constitute a chloroplast transit peptide. Low complexity predominate over residues 57–73 (PAAAATAEPAEAPVKAA). Residues 57-83 (PAAAATAEPAEAPVKAAKPPPIGPKRG) form a disordered region.

This sequence belongs to the PsaE family. In terms of processing, 2 isoforms exists (ratio 1:1). With or without the N-terminal alanine.

The protein resides in the plastid. Its subcellular location is the chloroplast thylakoid membrane. In terms of biological role, stabilizes the interaction between PsaC and the PSI core, assists the docking of the ferredoxin to PSI and interacts with ferredoxin-NADP oxidoreductase. This chain is Photosystem I reaction center subunit IV A, chloroplastic (PSAEA), found in Nicotiana sylvestris (Wood tobacco).